Consider the following 287-residue polypeptide: ATP synthase gamma chain (287 aa).

Belongs to the ATPase gamma chain family. In terms of assembly, F-type ATPases have 2 components, CF(1) - the catalytic core - and CF(0) - the membrane proton channel. CF(1) has five subunits: alpha(3), beta(3), gamma(1), delta(1), epsilon(1). CF(0) has three main subunits: a, b and c.

The protein localises to the cell inner membrane. In terms of biological role, produces ATP from ADP in the presence of a proton gradient across the membrane. The gamma chain is believed to be important in regulating ATPase activity and the flow of protons through the CF(0) complex. The sequence is that of ATP synthase gamma chain from Shigella sonnei (strain Ss046).